A 1252-amino-acid polypeptide reads, in one-letter code: ABC transporter B family member 19 (1252 aa).

Asn-5 is a glycosylation site (N-linked (GlcNAc...) asparagine). The 290-residue stretch at 41-330 folds into the ABC transmembrane type-1 1 domain; it reads MFVGSLGAIV…SFSNLGAFSK (290 aa). 2 consecutive transmembrane segments (helical) span residues 42 to 62 and 88 to 108; these read FVGSLGAIVHGSSMPVFFLLF and LYFVYLGLVVCFSSYAEIACW. An ATP-binding site is contributed by Asp-136. Helical transmembrane passes span 163-183, 187-207, 274-294, and 308-328; these read VGNFIHYLSTFLAGLVVGFVS, LALLSVAVIPGIAFAGGLYAY, CTYGIACMSWALVFWYAGVFI, and IFSAIVGGMSLGQSFSNLGAF. 2 residues coordinate brassinolide: Tyr-276 and Trp-283. The ABC transporter 1 domain occupies 365–601; that stretch reads IEFKDVTFSY…SGAYASLIRF (237 aa). The ATP site is built by Tyr-374, Ser-376, Gly-405, Lys-406, Ser-407, Thr-408, and Glu-529. N-linked (GlcNAc...) asparagine glycosylation occurs at Asn-641. An ABC transmembrane type-1 2 domain is found at 687–975; that stretch reads SIMGAVGSIL…TVSLAPEIIR (289 aa). The next 2 helical transmembrane spans lie at 688 to 708 and 732 to 752; these read IMGAVGSILSGFIGPTFAIVM and FIYIGAGLYAVGAYLIQHYFF. An N-linked (GlcNAc...) asparagine glycan is attached at Asn-758. Asp-780 contributes to the ATP binding site. Asn-785 and Asn-814 each carry an N-linked (GlcNAc...) asparagine glycan. Transmembrane regions (helical) follow at residues 822 to 842, 914 to 934, and 949 to 969; these read FIVAFIVEWRVSLLILGTFPL, GFLFGLSQLALYGSEALILWY, and VIKVFVVLVITANSVAETVSL. The interaction with FKBP42/TWD1 stretch occupies residues 965–1252; sequence ETVSLAPEII…RLLQLQTHRI (288 aa). The ABC transporter 2 domain occupies 1010 to 1246; it reads IEFRHVDFAY…PEGAYSRLLQ (237 aa). ATP is bound by residues Tyr-1019, Ser-1021, Arg-1022, Lys-1051, Ser-1052, and Ser-1053.

It belongs to the ABC transporter superfamily. ABCB family. Multidrug resistance exporter (TC 3.A.1.201) subfamily. As to quaternary structure, interacts with 1-naphthylphthalamic acid (NPA), and FKBP42/TWD1. In terms of processing, phosphorylated by PHOT1 in phototropic seedlings, to modulates auxin export and distribution and regulates leaf and petiole curling. Ubiquitous, mostly in shoot meristems. Present in the majority of stem cells, predominantly in a non-polar manner. Accumulates in seedlings roots and hypocotyls, and in roots apices and inflorescences.

The protein localises to the cell membrane. It catalyses the reaction (indol-3-yl)acetate(in) + ATP + H2O = (indol-3-yl)acetate(out) + ADP + phosphate + H(+). The enzyme catalyses brassinolide(in) + ATP + H2O = brassinolide(out) + ADP + phosphate + H(+). It carries out the reaction 24-epi-brassinolide(in) + ATP + H2O = 24-epi-brassinolide(out) + ADP + phosphate + H(+). The catalysed reaction is 24-epi-castasterone(in) + ATP + H2O = 24-epi-castasterone(out) + ADP + phosphate + H(+). It catalyses the reaction castasterone(in) + ATP + H2O = castasterone(out) + ADP + phosphate + H(+). Its activity is regulated as follows. Transport capacity is stimulated by the chaperone protein FKBP42/TWD1. ATPase activity is specifically activated by bioactive brassinosteroids in a dose-dependent manner, including brassinolide (BL), 24-epiBL and 24-epicastasterone (24-epiCS). Inhibited by vanadate. Its function is as follows. Brassinosteroid exporter that, in conjunction with ABCB1, supports the accumulation of exogenous brassinosteroids (BR) in the apoplast, thus promoting BR signaling initiation involving the specific receptor BRI1 and required for plant growth and stress responses. Mediates the transport of castasterone (CSA) and brassinolide (BL) across the plasma membrane. Auxin efflux transporter that acts as a negative regulator of light signaling to promote hypocotyl elongation by mediating leaf tip to petiole auxin flux. Required for the regulation of leaf position and morphology during PHOT1-mediated blue light responses involving auxin distribution, especially in low light fluence. Together with ABCB1 and in a FKBP42/TWD1-dependent manner, supports seed development by promoting stamen elongation and, to a lesser extent, anther dehiscence and pollen maturation, probably as auxin transporters. Contributes to the connective auxin transport (CAT) that ensures communication across the shoot system, including auxin loading at axillary bud apices to influence strigolactone-mediated bud outgrowth responses and shoot branching control. Mediates the accumulation of chlorophyll and anthocyanin, as well as the expression of genes in response to light. Participates in auxin efflux and thus regulates the polar auxin basipetal transport (from auxin-producing leaves to auxin-sensitive tissues, and from root tips to root elongating zone). Involved in diverse auxin-mediated responses including gravitropism, phototropism and lateral root formation. Required for the regulation of organ bending, such as gravitropic root bending. The sequence is that of ABC transporter B family member 19 from Arabidopsis thaliana (Mouse-ear cress).